Reading from the N-terminus, the 1009-residue chain is Type VII secretion system accessory factor EsaA (1009 aa).

The helical transmembrane segment at 7–27 (IYALIVTLIIIIAIVSMIFFV) threads the bilayer. A compositionally biased stretch (basic and acidic residues) spans 680-697 (TFAEEPQEPKIDKGKNDE). Residues 680–707 (TFAEEPQEPKIDKGKNDEFNTMSSNLDK) are disordered. 5 helical membrane-spanning segments follow: residues 822-842 (ISPTLFVLLMYLLSMITAYIF), 869-889 (VITSGVIGTTGLVEGLIVGLI), 903-923 (KFILMVILTMMVFVLINTYLL), 928-948 (SIGMFLMIAALGLYFVAMNNL), and 979-999 (IGLVLVILTVLVIIGFVLNMF).

This sequence belongs to the EsaA family. In terms of assembly, homodimer. Interacts with EssB.

The protein resides in the cell membrane. Component of the type VII secretion system (Ess). Provides together with EssB and other components such as EssC and EssE a secretion platform across the cytoplasmic membrane in the host. This is Type VII secretion system accessory factor EsaA from Staphylococcus aureus (strain COL).